The sequence spans 330 residues: Delta-aminolevulinic acid dehydratase (330 aa).

K203 functions as the Schiff-base intermediate with substrate in the catalytic mechanism. Positions 213 and 224 each coordinate 5-aminolevulinate. E240 serves as a coordination point for Mg(2+). K255 serves as the catalytic Schiff-base intermediate with substrate. Positions 281 and 320 each coordinate 5-aminolevulinate.

It belongs to the ALAD family. Homooctamer.

The enzyme catalyses 2 5-aminolevulinate = porphobilinogen + 2 H2O + H(+). Its pathway is porphyrin-containing compound metabolism; protoporphyrin-IX biosynthesis; coproporphyrinogen-III from 5-aminolevulinate: step 1/4. Catalyzes an early step in the biosynthesis of tetrapyrroles. Binds two molecules of 5-aminolevulinate per subunit, each at a distinct site, and catalyzes their condensation to form porphobilinogen. This chain is Delta-aminolevulinic acid dehydratase (hemB), found in Streptomyces coelicolor (strain ATCC BAA-471 / A3(2) / M145).